The following is a 520-amino-acid chain: Transposase for insertion sequence element IS21-like (520 aa).

Positions 13-78 (YMWYKVRELQ…KYEEYVRGTL (66 aa)) constitute an HTH IS21-type domain. Residues 136 to 312 (LPETPYGEYA…VPSEEFAVEK (177 aa)) enclose the Integrase catalytic domain.

Belongs to the transposase IS21/IS408/IS1162 family.

Functionally, involved in the transposition of the insertion sequence. This Bacteroides fragilis protein is Transposase for insertion sequence element IS21-like (tnpA).